The sequence spans 431 residues: Dual-specificity RNA methyltransferase RlmN (431 aa).

The segment at methionine 1 to glutamate 26 is disordered. A compositionally biased stretch (basic and acidic residues) spans alanine 9 to glutamate 26. Catalysis depends on glutamate 138, which acts as the Proton acceptor. Residues alanine 144–leucine 394 form the Radical SAM core domain. A disulfide bridge connects residues cysteine 151 and cysteine 397. 3 residues coordinate [4Fe-4S] cluster: cysteine 158, cysteine 162, and cysteine 165. S-adenosyl-L-methionine is bound by residues glycine 223–glutamate 224, serine 255, serine 277–histidine 279, and asparagine 354. Cysteine 397 functions as the S-methylcysteine intermediate in the catalytic mechanism.

This sequence belongs to the radical SAM superfamily. RlmN family. [4Fe-4S] cluster is required as a cofactor.

The protein localises to the cytoplasm. It catalyses the reaction adenosine(2503) in 23S rRNA + 2 reduced [2Fe-2S]-[ferredoxin] + 2 S-adenosyl-L-methionine = 2-methyladenosine(2503) in 23S rRNA + 5'-deoxyadenosine + L-methionine + 2 oxidized [2Fe-2S]-[ferredoxin] + S-adenosyl-L-homocysteine. The enzyme catalyses adenosine(37) in tRNA + 2 reduced [2Fe-2S]-[ferredoxin] + 2 S-adenosyl-L-methionine = 2-methyladenosine(37) in tRNA + 5'-deoxyadenosine + L-methionine + 2 oxidized [2Fe-2S]-[ferredoxin] + S-adenosyl-L-homocysteine. Specifically methylates position 2 of adenine 2503 in 23S rRNA and position 2 of adenine 37 in tRNAs. m2A2503 modification seems to play a crucial role in the proofreading step occurring at the peptidyl transferase center and thus would serve to optimize ribosomal fidelity. This chain is Dual-specificity RNA methyltransferase RlmN, found in Methylobacterium sp. (strain 4-46).